A 70-amino-acid chain; its full sequence is Conotoxin TsMLKM-011 (70 aa).

A signal peptide spans 1–24 (MLKMGVVLFVFLVLFPLATLQLDA). Residues 25-54 (DQPVERYAENKQLVSPYERRQIILHALGQR) constitute a propeptide that is removed on maturation. 3 cysteine pairs are disulfide-bonded: Cys-56-Cys-66, Cys-57-Cys-68, and Cys-62-Cys-69.

It belongs to the conotoxin M superfamily. In terms of tissue distribution, expressed by the venom duct.

Its subcellular location is the secreted. The chain is Conotoxin TsMLKM-011 from Conus tessulatus (Tessellate cone).